The following is a 392-amino-acid chain: Alanine--glyoxylate aminotransferase (392 aa).

Position 209 is an N6-(pyridoxal phosphate)lysine (Lys209). Lys225 is subject to N6-acetyllysine; alternate. N6-succinyllysine; alternate is present on Lys225. N6-acetyllysine occurs at positions 234 and 312. Position 360 (Arg360) interacts with substrate. The Microbody targeting signal signature appears at 390 to 392; that stretch reads KKL.

It belongs to the class-V pyridoxal-phosphate-dependent aminotransferase family. As to quaternary structure, homodimer. Pyridoxal 5'-phosphate serves as cofactor.

It is found in the peroxisome. It catalyses the reaction L-serine + pyruvate = 3-hydroxypyruvate + L-alanine. The enzyme catalyses glyoxylate + L-alanine = glycine + pyruvate. Peroxisomal aminotransferase that catalyzes the transamination of glyoxylate to glycine and contributes to the glyoxylate detoxification. Also catalyzes the transamination between L-serine and pyruvate and contributes to gluconeogenesis from the L-serine metabolism. The sequence is that of Alanine--glyoxylate aminotransferase from Pongo abelii (Sumatran orangutan).